A 597-amino-acid polypeptide reads, in one-letter code: CTP synthase (597 aa).

The tract at residues 1-272 (MARPKNVKYV…DMRVLKKLGL (272 aa)) is amidoligase domain. Position 18 (Ser18) interacts with CTP. Ser18 lines the UTP pocket. 19–24 (SLGKGI) is a binding site for ATP. Tyr59 lines the L-glutamine pocket. Asp76 provides a ligand contact to ATP. Mg(2+) is bound by residues Asp76 and Glu146. Residues 153 to 155 (DIE), 193 to 198 (KTKPTQ), and Lys229 each bind CTP. Residues 193–198 (KTKPTQ) and Lys229 each bind UTP. In terms of domain architecture, Glutamine amidotransferase type-1 spans 299–543 (NVAICGKYTE…VGAAKAYADG (245 aa)). Residue Gly363 participates in L-glutamine binding. Cys390 (nucleophile; for glutamine hydrolysis) is an active-site residue. L-glutamine is bound by residues 391–394 (LGMQ), Glu414, and Arg471. Active-site residues include His516 and Glu518.

The protein belongs to the CTP synthase family. In terms of assembly, homotetramer.

It carries out the reaction UTP + L-glutamine + ATP + H2O = CTP + L-glutamate + ADP + phosphate + 2 H(+). It catalyses the reaction L-glutamine + H2O = L-glutamate + NH4(+). The enzyme catalyses UTP + NH4(+) + ATP = CTP + ADP + phosphate + 2 H(+). It functions in the pathway pyrimidine metabolism; CTP biosynthesis via de novo pathway; CTP from UDP: step 2/2. Its activity is regulated as follows. Allosterically activated by GTP, when glutamine is the substrate; GTP has no effect on the reaction when ammonia is the substrate. The allosteric effector GTP functions by stabilizing the protein conformation that binds the tetrahedral intermediate(s) formed during glutamine hydrolysis. Inhibited by the product CTP, via allosteric rather than competitive inhibition. Its function is as follows. Catalyzes the ATP-dependent amination of UTP to CTP with either L-glutamine or ammonia as the source of nitrogen. Regulates intracellular CTP levels through interactions with the four ribonucleotide triphosphates. In Chlorobium luteolum (strain DSM 273 / BCRC 81028 / 2530) (Pelodictyon luteolum), this protein is CTP synthase.